A 367-amino-acid chain; its full sequence is Phospho-N-acetylmuramoyl-pentapeptide-transferase (367 aa).

10 helical membrane passes run 16 to 36 (LLLA…WVHF), 62 to 82 (TMGG…FNLV), 87 to 107 (MLLP…DDWL), 125 to 145 (FWIM…PQPY), 158 to 178 (VGEV…IVFI), 190 to 210 (SLAG…TFLA), 214 to 234 (LTNL…FLWY), 240 to 260 (QVFM…VVAL), 264 to 284 (QWIL…STLI), and 326 to 346 (FVLI…IFGS).

It belongs to the glycosyltransferase 4 family. MraY subfamily. Requires Mg(2+) as cofactor.

Its subcellular location is the cell membrane. It catalyses the reaction UDP-N-acetyl-alpha-D-muramoyl-L-alanyl-gamma-D-glutamyl-meso-2,6-diaminopimeloyl-D-alanyl-D-alanine + di-trans,octa-cis-undecaprenyl phosphate = di-trans,octa-cis-undecaprenyl diphospho-N-acetyl-alpha-D-muramoyl-L-alanyl-D-glutamyl-meso-2,6-diaminopimeloyl-D-alanyl-D-alanine + UMP. The protein operates within cell wall biogenesis; peptidoglycan biosynthesis. Functionally, catalyzes the initial step of the lipid cycle reactions in the biosynthesis of the cell wall peptidoglycan: transfers peptidoglycan precursor phospho-MurNAc-pentapeptide from UDP-MurNAc-pentapeptide onto the lipid carrier undecaprenyl phosphate, yielding undecaprenyl-pyrophosphoryl-MurNAc-pentapeptide, known as lipid I. The protein is Phospho-N-acetylmuramoyl-pentapeptide-transferase of Chloroflexus aggregans (strain MD-66 / DSM 9485).